We begin with the raw amino-acid sequence, 297 residues long: Pyridoxal 5'-phosphate synthase subunit PdxS (297 aa).

Asp-27 lines the D-ribose 5-phosphate pocket. Residue Lys-84 is the Schiff-base intermediate with D-ribose 5-phosphate of the active site. Gly-156 is a binding site for D-ribose 5-phosphate. Arg-168 contacts D-glyceraldehyde 3-phosphate. D-ribose 5-phosphate is bound by residues Gly-217 and 238–239 (GS).

It belongs to the PdxS/SNZ family. In the presence of PdxT, forms a dodecamer of heterodimers.

The catalysed reaction is aldehydo-D-ribose 5-phosphate + D-glyceraldehyde 3-phosphate + L-glutamine = pyridoxal 5'-phosphate + L-glutamate + phosphate + 3 H2O + H(+). Its pathway is cofactor biosynthesis; pyridoxal 5'-phosphate biosynthesis. Its function is as follows. Catalyzes the formation of pyridoxal 5'-phosphate from ribose 5-phosphate (RBP), glyceraldehyde 3-phosphate (G3P) and ammonia. The ammonia is provided by the PdxT subunit. Can also use ribulose 5-phosphate and dihydroxyacetone phosphate as substrates, resulting from enzyme-catalyzed isomerization of RBP and G3P, respectively. In Corynebacterium diphtheriae (strain ATCC 700971 / NCTC 13129 / Biotype gravis), this protein is Pyridoxal 5'-phosphate synthase subunit PdxS.